Here is a 1029-residue protein sequence, read N- to C-terminus: Protein phosphatase 1 regulatory subunit 12A (1029 aa).

The KVKF motif motif lies at 35–38 (KVKF). 6 ANK repeats span residues 39-68 (DDGA…DINY), 72-101 (DGLT…NINQ), 105-134 (EGWI…HVGA), 138-164 (EGDT…RQGV), 198-227 (SGGT…DVNI), and 231-260 (DGWT…DMET). (3S)-3-hydroxyasparagine; by HIF1AN occurs at positions 67 and 100. At Asn226 the chain carries (3S)-3-hydroxyasparagine; by HIF1AN. Residues 290-786 (LHSEKRDKKS…APSSSSLSTL (497 aa)) form a disordered region. The segment covering 291–300 (HSEKRDKKSP) has biased composition (basic and acidic residues). Ser299 carries the phosphoserine modification. The span at 302 to 314 (IESTANMENNQPQ) shows a compositional bias: polar residues. A compositionally biased stretch (basic and acidic residues) spans 318 to 353 (KNKETLIIEPEKNASRIESLEHEKADEEEEGKKDES). Acidic residues predominate over residues 357 to 369 (SEEDEEDDSESEA). Positions 385-402 (TSSTQAAPAAVTAPTLSS) are enriched in low complexity. Ser422 and Ser432 each carry phosphoserine. Basic and acidic residues predominate over residues 422-432 (SPKEEERKDES). Phosphothreonine is present on Thr443. Phosphoserine; by NUAK1 is present on Ser445. The residue at position 446 (Tyr446) is a Phosphotyrosine. Positions 469–480 (RSASSPRLSSSL) are enriched in low complexity. Ser472 carries the phosphoserine; by NUAK1 modification. Ser473 is subject to Phosphoserine; by CDK1. Ser477 carries the phosphoserine modification. The segment covering 481 to 491 (DNKEKEKDNKG) has biased composition (basic and acidic residues). Phosphoserine occurs at positions 507 and 509. Over residues 540-551 (NSSINEGSTYHR) the composition is skewed to polar residues. Over residues 564-578 (SCSVPSTTSTPTVTS) the composition is skewed to low complexity. The segment covering 585 to 594 (SLPSSTSTAA) has biased composition (polar residues). Low complexity predominate over residues 596–610 (TPPGSSSAGTQSSTS). Residues Ser601 and Ser618 each carry the phosphoserine modification. Residues 614-625 (WAEDSTEKEKDS) are compositionally biased toward basic and acidic residues. The span at 626 to 656 (APTAVTIPVAPTVVNAAAPSTTTLTTTTAGT) shows a compositional bias: low complexity. Residues 671 to 680 (VRDEESESQR) are compositionally biased toward basic and acidic residues. The interaction with ROCK2 stretch occupies residues 680–863 (RKARSRQARQ…VSFWTQDSDE (184 aa)). Positions 681–691 (KARSRQARQSR) are enriched in basic residues. Residues Ser690 and Ser693 each carry the phosphoserine; by PKA and PKG; in vitro modification. At Thr694 the chain carries Phosphothreonine; by ROCK1, ROCK2, CDC42BP, ZIPK/DAPK3 and RAF1. The span at 716-765 (RTREQENEEKEKEEKEKQDKEKQEEKKESEASREDEYKQKYSRTYDETYT) shows a compositional bias: basic and acidic residues. Positions 771 to 786 (STSSSSAPSSSSLSTL) are enriched in low complexity. The residue at position 801 (Ser801) is a Phosphoserine. Residues 808–927 (AYSRGLAKEN…PYSSRLEKDD (120 aa)) form a disordered region. Basic and acidic residues predominate over residues 813 to 839 (LAKENEREGEKKEEEKEGEDKSQPKSI). The segment covering 840–851 (RERRRPREKRRS) has biased composition (basic residues). A Phosphoserine; by ROCK2 modification is found at Ser851. 2 positions are modified to phosphoserine: Ser861 and Ser870. Residues 866–882 (QERQSDTEDGSSKRETQ) are compositionally biased toward basic and acidic residues. The segment covering 883–897 (TDSVSRYDSSSTSSS) has biased composition (low complexity). Phosphoserine is present on residues Ser902 and Ser907. A Phosphoserine; by NUAK1 modification is found at Ser909. Residues 913-927 (LEDRKPYSSRLEKDD) are compositionally biased toward basic and acidic residues. At Ser994 the chain carries Phosphoserine.

PP1 comprises a catalytic subunit, PPP1CA, PPP1CB or PPP1CC, and one or several targeting or regulatory subunits. PPP1R12A mediates binding to myosin. Interacts with ARHA and CIT. Binds PPP1R12B, ROCK1 and IL16. Interacts directly with PRKG1. Non-covalent dimer of 2 dimers; PRKG1-PRKG1 and PPP1R12A-PPP1R12A. Interacts with SMTNL1. Interacts with PPP1CB; the interaction is direct. Interacts (when phosphorylated at Ser-445, Ser-472 and Ser-910) with 14-3-3. Interacts with ROCK1 and ROCK2. Interacts with isoform 1 and isoform 2 of ZIPK/DAPK3. Interacts with RAF1. Interacts with HIF1AN. Interacts with NCKAP1L. In terms of processing, phosphorylated by CIT (Rho-associated kinase). Phosphorylated cooperatively by ROCK1 and CDC42BP on Thr-694. Phosphorylated on upon DNA damage, probably by ATM or ATR. In vitro, phosphorylation of Ser-693 by PKA and PKG appears to prevent phosphorylation of the inhibitory site Thr-694, probably mediated by PRKG1. Phosphorylation at Ser-445, Ser-472 and Ser-909 by NUAK1 promotes interaction with 14-3-3, leading to inhibit interaction with myosin light chain MLC2, preventing dephosphorylation of MLC2. May be phosphorylated at Thr-694 by DMPK; may inhibit the myosin phosphatase activity. Phosphorylated at Ser-473 by CDK1 during mitosis, creating docking sites for the POLO box domains of PLK1. Subsequently, PLK1 binds and phosphorylates PPP1R12A. In terms of tissue distribution, expressed in striated and vascular smooth muscle, specificcally in type 2a fibers (at protein level). Expression levels are 20-30% higher in developed males than females (at protein level).

It is found in the cytoplasm. The protein resides in the cytoskeleton. It localises to the stress fiber. Its function is as follows. Key regulator of protein phosphatase 1C (PPP1C). Mediates binding to myosin. As part of the PPP1C complex, involved in dephosphorylation of PLK1. Capable of inhibiting HIF1AN-dependent suppression of HIF1A activity. The chain is Protein phosphatase 1 regulatory subunit 12A from Mus musculus (Mouse).